The following is a 388-amino-acid chain: 3-oxo-Delta(4,5)-steroid 5-beta-reductase (388 aa).

The residue at position 2 (Ser-2) is an N-acetylserine. NADP(+) is bound by residues 35-37, 63-64, 81-82, Thr-105, and Gln-143; these read TGI, RR, and DV. Residues Lys-147 and Tyr-178 contribute to the active site. NADP(+) contacts are provided by residues Tyr-178, Ile-205, and 212–214; that span reads SLM.

Belongs to the short-chain dehydrogenases/reductases (SDR) family. Highly divergent. In terms of assembly, homodimer. In terms of tissue distribution, expressed in roots, stems, leaves, flowers, seeds and siliques. Expressed in the vascular bundles.

The catalysed reaction is 5beta-cholestan-3-one + NADP(+) = cholest-4-en-3-one + NADPH + H(+). It carries out the reaction 4,5beta-dihydrocortisone + NADP(+) = cortisone + NADPH + H(+). Involved in vascular strand development. Catalyzes the stereospecific conversion of progesterone to 5-beta-pregnane-3,20-dione. Can use progesterone, testosterone, 21-acetyl cortexone, 2-cyclohexenone, but-1-en-3-one, ethyl acrylate, ethylmethacrylate, cortisone and canarigenone as substrates, lower activity with 3-methyl-2-cyclohexenone and 3,5,5-trimethyl-2-cyclohexenone as substrate, and no activity with canarigenin, canarigenin digitoxoside and pregnenolone. May be involved in the formation of 5-beta phytoecdysteroids. The chain is 3-oxo-Delta(4,5)-steroid 5-beta-reductase (VEP1) from Arabidopsis thaliana (Mouse-ear cress).